The primary structure comprises 410 residues: uncharacterized protein (410 aa).

11-39 contributes to the NAD(+) binding site; that stretch reads VLVIGGGPSGTALSAELAARGLDVQQLAP.

The protein belongs to the lycopene cyclase family.

This is an uncharacterized protein from Deinococcus radiodurans (strain ATCC 13939 / DSM 20539 / JCM 16871 / CCUG 27074 / LMG 4051 / NBRC 15346 / NCIMB 9279 / VKM B-1422 / R1).